The sequence spans 279 residues: Pantothenate synthetase (279 aa).

ATP is bound at residue 26–33 (MGNLHDGH). Histidine 33 acts as the Proton donor in catalysis. Glutamine 57 is a binding site for (R)-pantoate. Glutamine 57 is a binding site for beta-alanine. Residue 144–147 (GKKD) coordinates ATP. Glutamine 150 contributes to the (R)-pantoate binding site. Residues valine 173 and 181 to 184 (LSSR) each bind ATP.

Belongs to the pantothenate synthetase family. Homodimer.

It localises to the cytoplasm. It carries out the reaction (R)-pantoate + beta-alanine + ATP = (R)-pantothenate + AMP + diphosphate + H(+). It functions in the pathway cofactor biosynthesis; (R)-pantothenate biosynthesis; (R)-pantothenate from (R)-pantoate and beta-alanine: step 1/1. In terms of biological role, catalyzes the condensation of pantoate with beta-alanine in an ATP-dependent reaction via a pantoyl-adenylate intermediate. The polypeptide is Pantothenate synthetase (Burkholderia mallei (strain NCTC 10229)).